We begin with the raw amino-acid sequence, 167 residues long: MQLILLSSLLLLGLSLANGHETDPEGQILNSLVETVSRLEKKIDKVENAFLTVHRARSFGSGSERLYVTNKQVGNFEAVRNTCVQAGGRIPSPQLLNENKAFASVLERHNKAAYLVVQNSAKFTNWAAGEPNNADGNKLCVKADAQGAWHSASCDEDLLVVCEFSFI.

The signal sequence occupies residues 1 to 19; that stretch reads MQLILLSSLLLLGLSLANG. The C-type lectin domain occupies 62–163; sequence GSERLYVTNK…CDEDLLVVCE (102 aa). 2 cysteine pairs are disulfide-bonded: cysteine 83–cysteine 162 and cysteine 140–cysteine 154.

This sequence belongs to the alpha-type phospholipase A2 inhibitor family. Homotrimer.

It localises to the secreted. In terms of biological role, has no PLA2 inhibitory activity. This chain is Phospholipase A2 inhibitor alpha-like protein, found in Elaphe climacophora (Japanese rat snake).